The primary structure comprises 677 residues: Regulator of G-protein signaling 9 (677 aa).

The 76-residue stretch at 30–105 (PETGVRMQNQ…PDSSLYRFQT (76 aa)) folds into the DEP domain. Positions 219–280 (VTAVRKEIMY…ITDDTQFWDL (62 aa)) constitute a G protein gamma domain. The 122-residue stretch at 295-416 (RWAFNFSELI…SPIYKEMLAK (122 aa)) folds into the RGS domain. Disordered stretches follow at residues 530-571 (SSGL…RAPL) and 639-677 (DSGP…GKAG).

In terms of assembly, heterodimer with GNB5. Interacts with RGS7BP, leading to regulate the subcellular location of the heterodimer formed with GNB5. Component of the RGS9-1-Gbeta5 complex composed of RGS9 (RGS9-1), Gbeta5 (GNB5) and RGS9BP. Interacts with PDE6G and GNAT1. Expressed in the central nervous system. Isoform RGS9L is found in striatum, hypothalamus and nucleus accumbens while isoform RGS9S is expressed in retina and pineal gland.

The protein resides in the membrane. Its function is as follows. Inhibits signal transduction by increasing the GTPase activity of G protein alpha subunits thereby driving them into their inactive GDP-bound form. Binds to GNAT1. Involved in phototransduction; key element in the recovery phase of visual transduction. In Rattus norvegicus (Rat), this protein is Regulator of G-protein signaling 9 (Rgs9).